We begin with the raw amino-acid sequence, 196 residues long: Kunitz trypsin inhibitor 5 (196 aa).

The N-terminal stretch at methionine 1 to glycine 19 is a signal peptide. Cysteine 156 and cysteine 167 are joined by a disulfide.

The protein belongs to the protease inhibitor I3 (leguminous Kunitz-type inhibitor) family.

The protein localises to the endoplasmic reticulum. In terms of biological role, can inhibit both serine proteases and cysteine proteases. May be involved in the modulation of the proteases that participate in the hydrolysis of dietary proteins in the gut of spider mites. The sequence is that of Kunitz trypsin inhibitor 5 from Arabidopsis thaliana (Mouse-ear cress).